A 233-amino-acid chain; its full sequence is 7-cyano-7-deazaguanine synthase (233 aa).

8 to 18 (LSGGLDSTTCM) contacts ATP. Cysteine 186, cysteine 194, cysteine 197, and cysteine 200 together coordinate Zn(2+).

This sequence belongs to the QueC family. In terms of assembly, homodimer. Zn(2+) serves as cofactor.

The catalysed reaction is 7-carboxy-7-deazaguanine + NH4(+) + ATP = 7-cyano-7-deazaguanine + ADP + phosphate + H2O + H(+). The protein operates within purine metabolism; 7-cyano-7-deazaguanine biosynthesis. Its function is as follows. Catalyzes the ATP-dependent conversion of 7-carboxy-7-deazaguanine (CDG) to 7-cyano-7-deazaguanine (preQ(0)). This is 7-cyano-7-deazaguanine synthase from Desulfitobacterium hafniense (strain DSM 10664 / DCB-2).